The chain runs to 343 residues: Probable long-chain-alcohol O-fatty-acyltransferase 2 (343 aa).

8 consecutive transmembrane segments (helical) span residues 7 to 27 (NLIK…YISS), 36 to 56 (LLSL…FSSV), 58 to 78 (FCVI…FLFA), 117 to 137 (PMSK…LHVY), 148 to 168 (FAFL…ILVF), 235 to 255 (GMLA…FYVI), 260 to 280 (TWEV…EIAM), and 292 to 312 (AVSG…LFYP).

Belongs to the wax synthase family.

The protein localises to the membrane. It carries out the reaction a long chain fatty alcohol + a fatty acyl-CoA = a wax ester + CoA. Catalyzes the final step in the synthesis of long-chain linear esters (waxes). The polypeptide is Probable long-chain-alcohol O-fatty-acyltransferase 2 (AT2) (Arabidopsis thaliana (Mouse-ear cress)).